We begin with the raw amino-acid sequence, 376 residues long: Heme chaperone HemW (376 aa).

The Radical SAM core domain maps to 1 to 233 (MFTLPPISLY…DKLLKKAGYK (233 aa)). Y10 is an S-adenosyl-L-methionine binding site. The [4Fe-4S] cluster site is built by C16, C20, and C23. S-adenosyl-L-methionine is bound by residues G66, 67–68 (GT), E99, Q126, R138, and D162.

It belongs to the anaerobic coproporphyrinogen-III oxidase family. HemW subfamily. The cofactor is [4Fe-4S] cluster.

The protein localises to the cytoplasm. Probably acts as a heme chaperone, transferring heme to an unknown acceptor. Binds one molecule of heme per monomer, possibly covalently. Binds 1 [4Fe-4S] cluster. The cluster is coordinated with 3 cysteines and an exchangeable S-adenosyl-L-methionine. This is Heme chaperone HemW from Buchnera aphidicola subsp. Acyrthosiphon pisum (strain APS) (Acyrthosiphon pisum symbiotic bacterium).